The primary structure comprises 691 residues: UvrABC system protein C (691 aa).

The region spanning 20-97 (STSGVYLWKD…IKKHTPRYNI (78 aa)) is the GIY-YIG domain. The UVR domain occupies 204-239 (DATVARLEKRMKRAVRQEAFEAAARIRDDIQAIRCI). Positions 662–691 (RSTTAPVREEYKEHEHDPQGESPGPGRKTD) are disordered. Basic and acidic residues predominate over residues 668–680 (VREEYKEHEHDPQ).

The protein belongs to the UvrC family. Interacts with UvrB in an incision complex.

The protein localises to the cytoplasm. The UvrABC repair system catalyzes the recognition and processing of DNA lesions. UvrC both incises the 5' and 3' sides of the lesion. The N-terminal half is responsible for the 3' incision and the C-terminal half is responsible for the 5' incision. The protein is UvrABC system protein C of Treponema pallidum (strain Nichols).